The chain runs to 102 residues: snRNA-activating protein complex subunit 5 (102 aa).

Residues 73-82 are compositionally biased toward polar residues; the sequence is QTTLKLSTRS. The interval 73–102 is disordered; it reads QTTLKLSTRSPMEEEEEEEEEEEEEEESDS. Over residues 85–102 the composition is skewed to acidic residues; that stretch reads EEEEEEEEEEEEEEESDS.

Part of the SNAPc complex composed of 5 subunits: SNAPC1, SNAPC2, SNAPC3, SNAPC4 and SNAPC5. SNAPC5 interacts with SNAPC4.

It is found in the nucleus. In terms of biological role, part of the SNAPc complex required for the transcription of both RNA polymerase II and III small-nuclear RNA genes. Binds to the proximal sequence element (PSE), a non-TATA-box basal promoter element common to these 2 types of genes. Recruits TBP and BRF2 to the U6 snRNA TATA box. The chain is snRNA-activating protein complex subunit 5 from Mus musculus (Mouse).